Here is a 638-residue protein sequence, read N- to C-terminus: Pentatricopeptide repeat-containing protein At1g59720, chloroplastic/mitochondrial (638 aa).

The transit peptide at 1-40 directs the protein to the chloroplast and mitochondrion; it reads MVVRSIIVSPPTTITYYHPMSIGLLVHPLSPHIPPASSPS. PPR repeat units follow at residues 82–112, 113–148, 150–184, 185–215, 216–246, 250–280, 288–318, 319–353, 356–390, and 392–422; these read TLFL…IENH, SSFM…GESS, DKHT…GFGG, DVYV…MPER, SLVS…MQRS, DGYT…LLRK, DVLV…MQKR, DLAS…RENV, NSVT…YCIE, and ALEH…MPMK. The interval 427–510 is type E motif; it reads IWRSLLDACC…EPGCSSIEIN (84 aa). Residues 511–541 are type E(+) motif; it reads GISHEFFAGDTSHPQTKQIYQQLKVIDDRLR. Residues 542-638 are type DYW motif; that stretch reads SIGYLPDRSQ…DGSCSCLDYW (97 aa).

Belongs to the PPR family. PCMP-H subfamily. As to quaternary structure, interacts with ORRM1. Interacts with VAR3/OZ1.

It is found in the plastid. It localises to the chloroplast. The protein resides in the mitochondrion. In terms of biological role, involved in multiple sites RNA editing events in chloroplasts. Involved in the editing of the site 2 of ndhB (ndhB-2) and site 3 of ndhD (ndhD-3) transcripts, which are two plastid-encoded subunits of the chloroplast NAD(P)H dehydrogenase (NDH) complex. Required for the activity of the NDH complex of the photosynthetic electron transport chain. This Arabidopsis thaliana (Mouse-ear cress) protein is Pentatricopeptide repeat-containing protein At1g59720, chloroplastic/mitochondrial (PCMP-H51).